Here is a 134-residue protein sequence, read N- to C-terminus: Probable glycine cleavage system H protein (134 aa).

In terms of domain architecture, Lipoyl-binding spans 29-110 (TVLVGITDYA…PYEAWIAKIK (82 aa)). Lys-70 carries the post-translational modification N6-lipoyllysine.

It belongs to the GcvH family. In terms of assembly, the glycine cleavage system is composed of four proteins: P, T, L and H. Requires (R)-lipoate as cofactor.

The glycine cleavage system catalyzes the degradation of glycine. The H protein shuttles the methylamine group of glycine from the P protein to the T protein. The polypeptide is Probable glycine cleavage system H protein (Pyrococcus furiosus (strain ATCC 43587 / DSM 3638 / JCM 8422 / Vc1)).